Consider the following 420-residue polypeptide: Phosphoribosylamine--glycine ligase (420 aa).

The 207-residue stretch at Lys-108–Asn-314 folds into the ATP-grasp domain. An ATP-binding site is contributed by Leu-134–Ser-195. Positions 284 and 286 each coordinate Mg(2+).

The protein belongs to the GARS family. Mg(2+) is required as a cofactor. It depends on Mn(2+) as a cofactor.

The catalysed reaction is 5-phospho-beta-D-ribosylamine + glycine + ATP = N(1)-(5-phospho-beta-D-ribosyl)glycinamide + ADP + phosphate + H(+). Its pathway is purine metabolism; IMP biosynthesis via de novo pathway; N(1)-(5-phospho-D-ribosyl)glycinamide from 5-phospho-alpha-D-ribose 1-diphosphate: step 2/2. This chain is Phosphoribosylamine--glycine ligase, found in Listeria innocua serovar 6a (strain ATCC BAA-680 / CLIP 11262).